The following is a 156-amino-acid chain: MSRRRVVQKRPVPPDSRYNSRLVSMMVRRIMRHGKKSVAHNIVYDALATIEERTGSDPLELFEKAVRNATPLVEVKARRVGGATYQVPMEVRSERGTTLALRWLIHFSRTRSGRSMASRLASELMDAANETGSAVRKREETHRMAEANKAFAHYRY.

It belongs to the universal ribosomal protein uS7 family. Part of the 30S ribosomal subunit. Contacts proteins S9 and S11.

One of the primary rRNA binding proteins, it binds directly to 16S rRNA where it nucleates assembly of the head domain of the 30S subunit. Is located at the subunit interface close to the decoding center, probably blocks exit of the E-site tRNA. This chain is Small ribosomal subunit protein uS7, found in Arthrospira platensis (Spirulina platensis).